The chain runs to 455 residues: GTPase Der (455 aa).

2 EngA-type G domains span residues 4-169 (PVVA…PPKS) and 178-353 (IQLA…EQHR). GTP contacts are provided by residues 10 to 17 (GRPNVGKS), 57 to 61 (DTGGL), 120 to 123 (NKCE), 184 to 191 (GRPNVGKS), 231 to 235 (DTAGI), and 296 to 299 (NKWD). The KH-like domain maps to 354–439 (RRVSTSVVNE…PLKLFWRGKQ (86 aa)).

This sequence belongs to the TRAFAC class TrmE-Era-EngA-EngB-Septin-like GTPase superfamily. EngA (Der) GTPase family. In terms of assembly, associates with the 50S ribosomal subunit.

GTPase that plays an essential role in the late steps of ribosome biogenesis. The protein is GTPase Der of Synechococcus sp. (strain WH7803).